A 699-amino-acid polypeptide reads, in one-letter code: MSKINKLEHIRNIGICAHIDAGKTTTTERILYYTGKSHKIGEVHEGGATMDWMEQEQERGITITSAATTCRWQDKIINIIDTPGHVDFTIEVERSLRVLDGAVAVFDGVAGVEPQSETVWRQADKYNVPRMCFVNKMDRMGADFYRCVEMLKDRLGAKPLVIQLPVGIEENFKGIIDLIKMKAVIWKDEALGAEYFEEDIPADMKDKAEEYRAKLLDMVVELDDHVMEKYLSGEEVTAEEIKRLIRKGTISAAFYPVLCGSAFKNKGVQPLLDAVVDFLPSPIDIGIVKGMEVSTGEEKDFPISVTEPFAALAFKIMNDPFVGSLTFIRIYSGKITSGTTVINTVKNKREKIGRMLLMHANNREDVKEASAGDIVALAGLKDTTTGDTLSDIDQQVILERMEFPEPVIELAVEPKSTADQEKMGLALSRLAAEDPSFRVSTDYETGQTVIKGMGELHLEIIIDRMRREFKVEANIGAPQVAYRETITKVCEIDYTHKKQSGGAGQFARVKIIFEPLKEVKDLKDEDKNKIFVFESKIIGGAVPKEYIPGVEKGLNNIRETGVIAGYPMIDFKATLVDGAFHDVDSSVLAFEIAAKAAFREGMPKGNPKLLEPIMQVEVITPDEYMGDIIGDLNSRRGQIQSMDPRGNAQVVTANIPLAEMFGYVNTLRSLSQGRAQFSMIFSHYDQVPSQVADIIKAKK.

The 276-residue stretch at 8 to 283 (EHIRNIGICA…AVVDFLPSPI (276 aa)) folds into the tr-type G domain. Residues 17–24 (AHIDAGKT), 81–85 (DTPGH), and 135–138 (NKMD) contribute to the GTP site.

The protein belongs to the TRAFAC class translation factor GTPase superfamily. Classic translation factor GTPase family. EF-G/EF-2 subfamily.

The protein resides in the cytoplasm. Catalyzes the GTP-dependent ribosomal translocation step during translation elongation. During this step, the ribosome changes from the pre-translocational (PRE) to the post-translocational (POST) state as the newly formed A-site-bound peptidyl-tRNA and P-site-bound deacylated tRNA move to the P and E sites, respectively. Catalyzes the coordinated movement of the two tRNA molecules, the mRNA and conformational changes in the ribosome. In Rickettsia peacockii (strain Rustic), this protein is Elongation factor G.